We begin with the raw amino-acid sequence, 543 residues long: MSVDELNQSILQYKEQLEQIAQALQLTRDETERSELNKLKSDLIELLELTVESLAATSDDDDAPDTAGRAPPATADNPIDDEFALFMREIKELQTEDSAAGEQAGEQTATEPERQPNDDDADNDDDADDKLDLDGLVGSKCSAPHLHTWGSTAYHNAMVCSLDADDLAHATAKVLFTNPTHREMLPCAYFLEGECRFTDEKCRYSHGEVVRLDQLRDYRAPQFERLRRAGSRALVKQSTRLWCKGTVTEVDFDAKRCKVRLEEGKREQLEVPFEDLLPLDEDEDGQEAAEDSESDTDGADEEEADDEALRKALLVEKSLFHPAPDRRLGEWEEHTRGIGSKIMQKMGYIVGTGLGREGEGIVVPVSAQVLPQGRSLDYCMELREQSNGDKDLFSVEKKLVQLKRQEAKRAAKDYERQRARESKSKDVFSFINEQVFSGAAGGESSRPNRNRPGALSRQELKEHSCKNLNIASLKLSEEIRRTEADVERLKIALTRHRAGTPAADNLLRQIDAKRAEISRMQASEGNISREQQLRSDKKKLTIF.

2 disordered regions span residues 55–79 and 95–132; these read AATSDDDDAPDTAGRAPPATADNPI and TEDSAAGEQAGEQTATEPERQPNDDDADNDDDADDKLD. Residues 65–76 are compositionally biased toward low complexity; sequence DTAGRAPPATAD. Acidic residues predominate over residues 118-131; sequence DDDADNDDDADDKL. The segment at 186-209 adopts a C3H1-type zinc-finger fold; that stretch reads PCAYFLEGECRFTDEKCRYSHGEV. Positions 272-304 are disordered; sequence PFEDLLPLDEDEDGQEAAEDSESDTDGADEEEA. The segment covering 277 to 304 has biased composition (acidic residues); that stretch reads LPLDEDEDGQEAAEDSESDTDGADEEEA. In terms of domain architecture, G-patch spans 335 to 381; it reads TRGIGSKIMQKMGYIVGTGLGREGEGIVVPVSAQVLPQGRSLDYCME. The segment at 438–460 is disordered; sequence GAAGGESSRPNRNRPGALSRQEL.

The protein resides in the nucleus. In terms of biological role, transcription repressor. In Anopheles gambiae (African malaria mosquito), this protein is Zinc finger CCCH-type with G patch domain-containing protein.